The sequence spans 436 residues: UDP-N-acetylmuramate--L-alanine ligase (436 aa).

108–114 (GAHGKTS) lines the ATP pocket.

It belongs to the MurCDEF family.

The protein localises to the cytoplasm. It carries out the reaction UDP-N-acetyl-alpha-D-muramate + L-alanine + ATP = UDP-N-acetyl-alpha-D-muramoyl-L-alanine + ADP + phosphate + H(+). It functions in the pathway cell wall biogenesis; peptidoglycan biosynthesis. Cell wall formation. The chain is UDP-N-acetylmuramate--L-alanine ligase from Bacillus cereus (strain B4264).